We begin with the raw amino-acid sequence, 61 residues long: Photosystem II reaction center protein K (61 aa).

A propeptide spanning residues 1–24 is cleaved from the precursor; sequence MPNILSLTCICFNSVLYPTSFFFA. Residues 32 to 52 form a helical membrane-spanning segment; sequence IFNPIVDIMPVIPLFFFLLAF.

This sequence belongs to the PsbK family. As to quaternary structure, PSII is composed of 1 copy each of membrane proteins PsbA, PsbB, PsbC, PsbD, PsbE, PsbF, PsbH, PsbI, PsbJ, PsbK, PsbL, PsbM, PsbT, PsbX, PsbY, PsbZ, Psb30/Ycf12, at least 3 peripheral proteins of the oxygen-evolving complex and a large number of cofactors. It forms dimeric complexes. Detected in both etioplasts and green leaves; PSII is only assembled in green leaves.

The protein localises to the plastid. It localises to the chloroplast thylakoid membrane. One of the components of the core complex of photosystem II (PSII). PSII is a light-driven water:plastoquinone oxidoreductase that uses light energy to abstract electrons from H(2)O, generating O(2) and a proton gradient subsequently used for ATP formation. It consists of a core antenna complex that captures photons, and an electron transfer chain that converts photonic excitation into a charge separation. This chain is Photosystem II reaction center protein K, found in Hordeum vulgare (Barley).